We begin with the raw amino-acid sequence, 295 residues long: uncharacterized protein (295 aa).

2 disordered regions span residues 33–52 (VDAP…DSHS) and 180–295 (LSKA…AELK). Phosphoserine is present on Ser50. Polar residues-rich tracts occupy residues 205–217 (QKNS…SKLI) and 241–251 (TSRASVLSQSP). Residues 267 to 276 (EASEGPEDTP) show a composition bias toward acidic residues. Residues 277–289 (ESSQSPEESVSAS) are compositionally biased toward low complexity.

This is an uncharacterized protein from Homo sapiens (Human).